The chain runs to 4043 residues: Hybrid PKS-NRPS synthetase thnA (4043 aa).

One can recognise a Ketosynthase family 3 (KS3) domain in the interval 6-440 (LEPIAIVGSA…GSNAHAILEE (435 aa)). Active-site for beta-ketoacyl synthase activity residues include Cys179, His319, and His360. The interval 558-894 (VFTGQGAQWA…FSDALGFVWT (337 aa)) is malonyl-CoA:ACP transacylase (MAT) domain. Residues 952 to 1090 (HEILGTILPE…ATVKIILGTP (139 aa)) form an N-terminal hotdog fold region. The dehydratase (DH) domain stretch occupies residues 952–1256 (HEILGTILPE…LSIKTFAPAT (305 aa)). Residues 952 to 1258 (HEILGTILPE…IKTFAPATQA (307 aa)) form the PKS/mFAS DH domain. Residue His984 is the Proton acceptor; for dehydratase activity of the active site. Residues 1105–1258 (LFPIDADRFY…IKTFAPATQA (154 aa)) form a C-terminal hotdog fold region. Residue Asp1166 is the Proton donor; for dehydratase activity of the active site. A methyltransferase (MT) domain region spans residues 1417 to 1591 (LASMMKQITH…RKAGFAGVDA (175 aa)). A ketoreductase (KR) domain region spans residues 2146–2320 (TYLLVGLTGK…GSTFDIGQVA (175 aa)). Residues 2434–2512 (EQALDILKEC…ELCDRVVDKL (79 aa)) enclose the Carrier 1 domain. The residue at position 2472 (Ser2472) is an O-(pantetheine 4'-phosphoryl)serine. The disordered stretch occupies residues 2521–2618 (GKQGESQPPA…PPPPEPAVER (98 aa)). Residues 2527–2536 (QPPASTAQPQ) are compositionally biased toward low complexity. Residues 2537–2547 (PVAPKPKPLPV) show a composition bias toward pro residues. The segment covering 2578 to 2605 (YSATEASTRSGSPSEATRLSQKVSSKLQ) has biased composition (polar residues). Residues 2626 to 3067 (IKSVPISLGQ…IPRFSEKQLA (442 aa)) form a condensation (C) domain region. Positions 3092–3496 (QVARENPDKV…GTMVFHSRMA (405 aa)) are adenylation (A) domain. The Carrier 2 domain occupies 3614-3695 (TELTETMIQL…EMAQKVEETI (82 aa)). Residue Ser3655 is modified to O-(pantetheine 4'-phosphoryl)serine. Residues 3736 to 3954 (ITGATGFLSK…DMLPAVLTAQ (219 aa)) are reductase (R) domain.

It in the C-terminal section; belongs to the NRP synthetase family.

The catalysed reaction is malate + 6 malonyl-CoA + acetyl-CoA + 2 AH2 + 2 S-adenosyl-L-methionine + 5 NADPH + 9 H(+) = trihazone A + 2 A + 2 S-adenosyl-L-homocysteine + 6 CO2 + 5 NADP(+) + 7 CoA + 6 H2O. It participates in secondary metabolite biosynthesis. Functionally, hybrid PKS-NRPS synthetase; part of the gene cluster that produces the tetronate natural products trihazones. The PKS-NRPS synthetase thnA with the help of the trans-enoyl reductase thnE are responsible for the synthesis of the carboxylmethyl containing trihazone A. The PKS portion of thnA synthesizes beta-keto-triene chain from one acetyl-CoA and 6 equivalents of malonyl-CoA, in collaboration with thnE, which selectively reduces the enoyl intermediate during the first and fourth iteration of the PKS. The NRPS domain selects and activates malate, of which the alpha-hydroxyl group attacks the completed polyketide acyl-S-ACP chain to form the ester product. Intramolecular Dieckmann cyclization catalyzed by the terminal reductase domain releases the product as trihazone A from the PKS-NPRS. The pathway begins with the formation of trihazone A by the hybrid PKS-NRPS synthetase thnA and the trans-enoyl reductase thnE. Trihazone A is further decarboxylated by the 2-oxoglutarate-dependent dioxygenase thnC to produce trihazone D. The function of the FAD-dependent monooxygenase thnD has still to be identified. In Trichoderma harzianum (Hypocrea lixii), this protein is Hybrid PKS-NRPS synthetase thnA.